We begin with the raw amino-acid sequence, 282 residues long: Probable protein phosphatase 2C 10 (282 aa).

The 248-residue stretch at 34-281 (KFGYSLVKGK…DDISCIVVRL (248 aa)) folds into the PPM-type phosphatase domain. Mn(2+) contacts are provided by Asp-71, Gly-72, Asp-233, and Asp-272.

It belongs to the PP2C family. It depends on Mg(2+) as a cofactor. Mn(2+) is required as a cofactor.

It catalyses the reaction O-phospho-L-seryl-[protein] + H2O = L-seryl-[protein] + phosphate. The catalysed reaction is O-phospho-L-threonyl-[protein] + H2O = L-threonyl-[protein] + phosphate. The chain is Probable protein phosphatase 2C 10 from Arabidopsis thaliana (Mouse-ear cress).